The following is an 87-amino-acid chain: RNA-binding protein Hfq (87 aa).

One can recognise a Sm domain in the interval 9–68; that stretch reads DPFLNTLRRERIPVSIYLVNGIKLQGYIESFDQFVILLKNSISQMIYKHAISTVVPNHTN. Positions 66–87 are disordered; the sequence is HTNNQEHNQSQYNNNNACISKP.

It belongs to the Hfq family. Homohexamer.

In terms of biological role, RNA chaperone that binds small regulatory RNA (sRNAs) and mRNAs to facilitate mRNA translational regulation in response to envelope stress, environmental stress and changes in metabolite concentrations. Also binds with high specificity to tRNAs. This is RNA-binding protein Hfq from Wigglesworthia glossinidia brevipalpis.